A 182-amino-acid chain; its full sequence is Protein Syd (182 aa).

This sequence belongs to the Syd family.

The protein localises to the cell inner membrane. In terms of biological role, interacts with the SecY protein in vivo. May bind preferentially to an uncomplexed state of SecY, thus functioning either as a chelating agent for excess SecY in the cell or as a regulatory factor that negatively controls the translocase function. In Aliivibrio salmonicida (strain LFI1238) (Vibrio salmonicida (strain LFI1238)), this protein is Protein Syd.